The primary structure comprises 217 residues: Probable GTP-binding protein EngB (217 aa).

Residues 37–214 (AGVEVAFAGR…RAAMARLIGE (178 aa)) form the EngB-type G domain. GTP contacts are provided by residues 45–52 (GRSNVGKS), 72–76 (GRTQE), 92–95 (DMPG), 159–162 (TKAD), and 193–195 (TSS). S52 and T74 together coordinate Mg(2+).

It belongs to the TRAFAC class TrmE-Era-EngA-EngB-Septin-like GTPase superfamily. EngB GTPase family. Requires Mg(2+) as cofactor.

Functionally, necessary for normal cell division and for the maintenance of normal septation. In Nitrobacter hamburgensis (strain DSM 10229 / NCIMB 13809 / X14), this protein is Probable GTP-binding protein EngB.